Here is a 615-residue protein sequence, read N- to C-terminus: Lipoprotein LpqB (615 aa).

The first 29 residues, 1-29 (MGADRGRGGRRRPARVVAYAVGGVVLLAG), serve as a signal peptide directing secretion. Residue C30 is the site of N-palmitoyl cysteine attachment. C30 carries S-diacylglycerol cysteine lipidation. Positions 100 to 123 (PDESATVLAGGPGTESDHSGNRED) are disordered. Residues 114–123 (ESDHSGNRED) are compositionally biased toward basic and acidic residues.

Belongs to the LpqB lipoprotein family.

The protein resides in the cell membrane. This is Lipoprotein LpqB from Streptomyces coelicolor (strain ATCC BAA-471 / A3(2) / M145).